The sequence spans 284 residues: Shikimate dehydrogenase (NADP(+)) (284 aa).

Shikimate-binding positions include 23–25 and threonine 70; that span reads SLS. Residue lysine 74 is the Proton acceptor of the active site. Glutamate 86 is a binding site for NADP(+). Shikimate contacts are provided by asparagine 95 and aspartate 111. Residues 135–139, 159–164, and alanine 227 each bind NADP(+); these read GAGGA and NRTPGR. Tyrosine 229 provides a ligand contact to shikimate. Glycine 251 lines the NADP(+) pocket.

Belongs to the shikimate dehydrogenase family. As to quaternary structure, homodimer.

It carries out the reaction shikimate + NADP(+) = 3-dehydroshikimate + NADPH + H(+). Its pathway is metabolic intermediate biosynthesis; chorismate biosynthesis; chorismate from D-erythrose 4-phosphate and phosphoenolpyruvate: step 4/7. Involved in the biosynthesis of the chorismate, which leads to the biosynthesis of aromatic amino acids. Catalyzes the reversible NADPH linked reduction of 3-dehydroshikimate (DHSA) to yield shikimate (SA). This is Shikimate dehydrogenase (NADP(+)) from Rubrobacter xylanophilus (strain DSM 9941 / JCM 11954 / NBRC 16129 / PRD-1).